A 1331-amino-acid chain; its full sequence is Mitogen-activated protein kinase kinase kinase 15 (1331 aa).

Residues 1–13 (MEGGGGSGGGGGP) show a composition bias toward gly residues. A disordered region spans residues 1–61 (MEGGGGSGGG…GEAEGGRGPR (61 aa)). One can recognise a Protein kinase domain in the interval 656–912 (NGERVVLGKG…AADLLQEGFL (257 aa)). ATP contacts are provided by residues 662–670 (LGKGSYGIV) and K685. D777 functions as the Proton acceptor in the catalytic mechanism. Disordered regions lie at residues 934–964 (GTGTLALPSSGELVGSSSSEHGSISPDSDAQ) and 983–1005 (LSVPDESPALDDRSTALPPEERD). Residues 940-962 (LPSSGELVGSSSSEHGSISPDSD) are compositionally biased toward low complexity. Over residues 992-1005 (LDDRSTALPPEERD) the composition is skewed to basic and acidic residues. A coiled-coil region spans residues 1216-1236 (LVQKEREYQNLLRLILDQKTQ).

The protein belongs to the protein kinase superfamily. STE Ser/Thr protein kinase family. MAP kinase kinase kinase subfamily. Mg(2+) serves as cofactor.

It catalyses the reaction L-seryl-[protein] + ATP = O-phospho-L-seryl-[protein] + ADP + H(+). It carries out the reaction L-threonyl-[protein] + ATP = O-phospho-L-threonyl-[protein] + ADP + H(+). With respect to regulation, contains an N-terminal autoinhibitory domain. Activated by phosphorylation at Thr-816, inhibited by phosphorylation at Ser-928. In terms of biological role, serine/threonine kinase which acts as a component of the MAP kinase signal transduction pathway. Once activated, acts as an upstream activator of the p38 MAPK signal transduction cascade through the phosphorylation and activation of several MAP kinase kinases. May function in a signal transduction pathway that is activated by various cell stresses and leads to apoptosis. Involved in phosphorylation of WNK4 in response to osmotic stress or hypotonic low-chloride stimulation via the p38 MAPK signal transduction cascade. In Mus musculus (Mouse), this protein is Mitogen-activated protein kinase kinase kinase 15.